A 183-amino-acid polypeptide reads, in one-letter code: CASP-like protein UU1 (183 aa).

Residues Met-1 to Pro-33 lie on the Cytoplasmic side of the membrane. A helical membrane pass occupies residues Ala-34–Ala-54. The Extracellular segment spans residues Asp-55 to Ala-72. The chain crosses the membrane as a helical span at residues Ile-73 to Ile-93. Residues Arg-94–Thr-118 are Cytoplasmic-facing. A helical transmembrane segment spans residues Tyr-119 to Gly-139. Over Ser-140 to Thr-156 the chain is Extracellular. N-linked (GlcNAc...) asparagine glycosylation is present at Asn-141. Residues Phe-157–Val-177 form a helical membrane-spanning segment. Topologically, residues Lys-178–Ala-183 are cytoplasmic.

Belongs to the Casparian strip membrane proteins (CASP) family. In terms of assembly, homodimer and heterodimers.

It localises to the cell membrane. The chain is CASP-like protein UU1 from Selaginella moellendorffii (Spikemoss).